The sequence spans 311 residues: p-hydroxybenzoic acid efflux pump subunit AaeA (311 aa).

Residues 11–31 form a helical membrane-spanning segment; sequence IGITLLVVLLAVIAIFKVWAF.

Belongs to the membrane fusion protein (MFP) (TC 8.A.1) family.

It is found in the cell inner membrane. In terms of biological role, forms an efflux pump with AaeB. In Yersinia enterocolitica serotype O:8 / biotype 1B (strain NCTC 13174 / 8081), this protein is p-hydroxybenzoic acid efflux pump subunit AaeA.